A 158-amino-acid polypeptide reads, in one-letter code: S-ribosylhomocysteine lyase (158 aa).

Fe cation contacts are provided by His-54, His-58, and Cys-124.

This sequence belongs to the LuxS family. In terms of assembly, homodimer. Fe cation is required as a cofactor.

It carries out the reaction S-(5-deoxy-D-ribos-5-yl)-L-homocysteine = (S)-4,5-dihydroxypentane-2,3-dione + L-homocysteine. Its function is as follows. Involved in the synthesis of autoinducer 2 (AI-2) which is secreted by bacteria and is used to communicate both the cell density and the metabolic potential of the environment. The regulation of gene expression in response to changes in cell density is called quorum sensing. Catalyzes the transformation of S-ribosylhomocysteine (RHC) to homocysteine (HC) and 4,5-dihydroxy-2,3-pentadione (DPD). This Limosilactobacillus reuteri (strain DSM 20016) (Lactobacillus reuteri) protein is S-ribosylhomocysteine lyase.